The primary structure comprises 372 residues: Coxsackievirus and adenovirus receptor homolog (372 aa).

The first 22 residues, 1-22, serve as a signal peptide directing secretion; sequence MDMRTSFLCVTYVILLTGSACG. Ig-like C2-type domains follow at residues 23–140 and 130–234; these read LQIT…YLLT and PGIA…VTIT. The Extracellular portion of the chain corresponds to 23–241; sequence LQITSTGQTS…TITQPPNTAG (219 aa). Disulfide bonds link Cys-45/Cys-124, Cys-150/Cys-227, and Cys-166/Cys-216. N-linked (GlcNAc...) asparagine glycosylation occurs at Asn-205. Residues 242 to 262 traverse the membrane as a helical segment; it reads IIAGVIICILLLLILLALILF. Over 263-372 the chain is Cytoplasmic; it reads CCCRARHKKK…PAQNKDGSIV (110 aa). The disordered stretch occupies residues 286 to 352; that stretch reads PPPKSRVSTA…PPSRMAGPNL (67 aa). Over residues 291–317 the composition is skewed to polar residues; sequence RVSTARSFTSVGSQRSSLGSMSPSNLH. Basic and acidic residues predominate over residues 318-336; that stretch reads EYSKPQYDKIPSEEYDRPP.

Monomer. Probably homodimer formed by 2 molecules on adjacent cells.

It is found in the cell membrane. The protein localises to the basolateral cell membrane. It localises to the cell junction. Its subcellular location is the tight junction. The protein resides in the adherens junction. In terms of biological role, may function as a homophilic cell adhesion molecule and be essential for tight junction integrity. May also be involved in transepithelial migration of leukocytes through adhesive interactions with jaml. The interaction between both receptors may also mediate the activation of gamma-delta T-cells, a subpopulation of T-cells residing in epithelia and involved in tissue homeostasis and repair. This chain is Coxsackievirus and adenovirus receptor homolog (cxadr), found in Danio rerio (Zebrafish).